Reading from the N-terminus, the 779-residue chain is Endonuclease MutS2 (779 aa).

Position 328–335 (328–335) interacts with ATP; it reads GPNTGGKT. Residues 704–779 form the Smr domain; the sequence is LDLRGKRYEE…GSGATIVTLG (76 aa).

Belongs to the DNA mismatch repair MutS family. MutS2 subfamily. Homodimer. Binds to stalled ribosomes, contacting rRNA.

Its function is as follows. Endonuclease that is involved in the suppression of homologous recombination and thus may have a key role in the control of bacterial genetic diversity. Acts as a ribosome collision sensor, splitting the ribosome into its 2 subunits. Detects stalled/collided 70S ribosomes which it binds and splits by an ATP-hydrolysis driven conformational change. Acts upstream of the ribosome quality control system (RQC), a ribosome-associated complex that mediates the extraction of incompletely synthesized nascent chains from stalled ribosomes and their subsequent degradation. Probably generates substrates for RQC. The chain is Endonuclease MutS2 from Streptococcus pyogenes serotype M18 (strain MGAS8232).